We begin with the raw amino-acid sequence, 564 residues long: Eukaryotic translation initiation factor 3 subunit L (564 aa).

In terms of domain architecture, PCI spans 331–537 (DAIRVFANIL…IHIADTKVAR (207 aa)).

Belongs to the eIF-3 subunit L family. As to quaternary structure, component of the eukaryotic translation initiation factor 3 (eIF-3) complex, which is composed of 13 subunits: EIF3A, EIF3B, EIF3C, EIF3D, EIF3E, EIF3F, EIF3G, EIF3H, EIF3I, EIF3J, EIF3K, EIF3L and EIF3M.

It is found in the cytoplasm. Its function is as follows. Component of the eukaryotic translation initiation factor 3 (eIF-3) complex, which is involved in protein synthesis of a specialized repertoire of mRNAs and, together with other initiation factors, stimulates binding of mRNA and methionyl-tRNAi to the 40S ribosome. The eIF-3 complex specifically targets and initiates translation of a subset of mRNAs involved in cell proliferation. In Gallus gallus (Chicken), this protein is Eukaryotic translation initiation factor 3 subunit L.